A 146-amino-acid chain; its full sequence is Cytidine deaminase (146 aa).

The CMP/dCMP-type deaminase domain maps to 13 to 140; sequence EHVQRLLLSS…ELLPASFGPE (128 aa). Residue 54–56 coordinates substrate; sequence NIE. A Zn(2+)-binding site is contributed by Cys-65. The active-site Proton donor is the Glu-67. The Zn(2+) site is built by Cys-99 and Cys-102.

This sequence belongs to the cytidine and deoxycytidylate deaminase family. Homotetramer. The cofactor is Zn(2+).

It carries out the reaction cytidine + H2O + H(+) = uridine + NH4(+). The enzyme catalyses 2'-deoxycytidine + H2O + H(+) = 2'-deoxyuridine + NH4(+). This enzyme scavenges exogenous and endogenous cytidine and 2'-deoxycytidine for UMP synthesis. The protein is Cytidine deaminase (Cda) of Mus musculus (Mouse).